The primary structure comprises 136 residues: Nucleoside diphosphate kinase (136 aa).

Positions 10, 58, 86, 92, 104, and 114 each coordinate ATP. The Pros-phosphohistidine intermediate role is filled by His-117.

The protein belongs to the NDK family. As to quaternary structure, homotetramer. Requires Mg(2+) as cofactor.

Its subcellular location is the cytoplasm. The enzyme catalyses a 2'-deoxyribonucleoside 5'-diphosphate + ATP = a 2'-deoxyribonucleoside 5'-triphosphate + ADP. It catalyses the reaction a ribonucleoside 5'-diphosphate + ATP = a ribonucleoside 5'-triphosphate + ADP. In terms of biological role, major role in the synthesis of nucleoside triphosphates other than ATP. The ATP gamma phosphate is transferred to the NDP beta phosphate via a ping-pong mechanism, using a phosphorylated active-site intermediate. The sequence is that of Nucleoside diphosphate kinase from Mycobacteroides abscessus (strain ATCC 19977 / DSM 44196 / CCUG 20993 / CIP 104536 / JCM 13569 / NCTC 13031 / TMC 1543 / L948) (Mycobacterium abscessus).